Reading from the N-terminus, the 545-residue chain is Chaperonin GroEL 2 (545 aa).

ATP-binding positions include 30–33 (TLGP), lysine 51, 87–91 (DGTTT), glycine 415, and aspartate 494. Residues 526-545 (EKGAGMPGMPPGGGYPGMGM) form a disordered region. Positions 536–545 (PGGGYPGMGM) are enriched in gly residues.

It belongs to the chaperonin (HSP60) family. In terms of assembly, forms a cylinder of 14 subunits composed of two heptameric rings stacked back-to-back. Interacts with the co-chaperonin GroES.

It is found in the cytoplasm. It carries out the reaction ATP + H2O + a folded polypeptide = ADP + phosphate + an unfolded polypeptide.. Together with its co-chaperonin GroES, plays an essential role in assisting protein folding. The GroEL-GroES system forms a nano-cage that allows encapsulation of the non-native substrate proteins and provides a physical environment optimized to promote and accelerate protein folding. The sequence is that of Chaperonin GroEL 2 from Syntrophus aciditrophicus (strain SB).